A 250-amino-acid chain; its full sequence is Superoxide dismutase 1 copper chaperone (250 aa).

Residues serine 4–isoleucine 67 form the HMA domain. 4 residues coordinate Cu cation: cysteine 15, cysteine 18, cysteine 229, and cysteine 231.

This sequence belongs to the CCS1 family. Cu(2+) is required as a cofactor.

The protein resides in the cytoplasm. Functionally, copper chaperone for superoxide dismutase 1 (SOD1). Binds copper ions and delivers them specifically to SOD1. This Debaryomyces hansenii (strain ATCC 36239 / CBS 767 / BCRC 21394 / JCM 1990 / NBRC 0083 / IGC 2968) (Yeast) protein is Superoxide dismutase 1 copper chaperone (CCS1).